The following is a 318-amino-acid chain: NAD kinase (318 aa).

The active-site Proton acceptor is Asp-84. Residues 84 to 85, Arg-89, 159 to 160, Arg-170, Asp-189, and 200 to 205 contribute to the NAD(+) site; these read DG, NE, and TAYAFS.

It belongs to the NAD kinase family. A divalent metal cation serves as cofactor.

Its subcellular location is the cytoplasm. It carries out the reaction NAD(+) + ATP = ADP + NADP(+) + H(+). Functionally, involved in the regulation of the intracellular balance of NAD and NADP, and is a key enzyme in the biosynthesis of NADP. Catalyzes specifically the phosphorylation on 2'-hydroxyl of the adenosine moiety of NAD to yield NADP. This Cutibacterium acnes (strain DSM 16379 / KPA171202) (Propionibacterium acnes) protein is NAD kinase.